Consider the following 338-residue polypeptide: tRNA methyltransferase 10 homolog A (338 aa).

2 disordered regions span residues 1 to 91 and 296 to 338; these read MSSE…DRKR and RVEG…SVPH. Position 22 is a phosphoserine (S22). Positions 52 to 80 form a coiled coil; sequence KQWEEQRELRKQKRKEKRKRKQLERQCQP. The span at 61–73 shows a compositional bias: basic residues; the sequence is RKQKRKEKRKRKQ. The region spanning 88–279 is the SAM-dependent MTase TRM10-type domain; it reads DRKRIRRDVV…TILPQRKGAV (192 aa). A compositionally biased stretch (basic and acidic residues) spans 308-328; it reads EENRHELDSTHEEEKQDKENS. The span at 329 to 338 shows a compositional bias: polar residues; sequence TESTVNSVPH. S335 carries the phosphoserine modification.

It belongs to the class IV-like SAM-binding methyltransferase superfamily. TRM10 family. In terms of assembly, interacts with tRNA.

It localises to the nucleus. Its subcellular location is the nucleolus. It catalyses the reaction guanosine(9) in tRNA + S-adenosyl-L-methionine = N(1)-methylguanosine(9) in tRNA + S-adenosyl-L-homocysteine + H(+). Functionally, S-adenosyl-L-methionine-dependent guanine N(1)-methyltransferase that catalyzes the formation of N(1)-methylguanine at position 9 (m1G9) in tRNAs. Probably not able to catalyze formation of N(1)-methyladenine at position 9 (m1A9) in tRNAs. This chain is tRNA methyltransferase 10 homolog A (TRMT10A), found in Bos taurus (Bovine).